Here is a 272-residue protein sequence, read N- to C-terminus: Putative phosphoenolpyruvate synthase regulatory protein (272 aa).

152–159 (GVSRSGKT) contributes to the ADP binding site.

It belongs to the pyruvate, phosphate/water dikinase regulatory protein family. PSRP subfamily.

The enzyme catalyses [pyruvate, water dikinase] + ADP = [pyruvate, water dikinase]-phosphate + AMP + H(+). The catalysed reaction is [pyruvate, water dikinase]-phosphate + phosphate + H(+) = [pyruvate, water dikinase] + diphosphate. In terms of biological role, bifunctional serine/threonine kinase and phosphorylase involved in the regulation of the phosphoenolpyruvate synthase (PEPS) by catalyzing its phosphorylation/dephosphorylation. In Alcanivorax borkumensis (strain ATCC 700651 / DSM 11573 / NCIMB 13689 / SK2), this protein is Putative phosphoenolpyruvate synthase regulatory protein.